Consider the following 169-residue polypeptide: MRDAVTTLIKNYDLTGRYLDRNAMDELKAYFESGSARIAAAAMINANSATIVKRAAAQLFEEIPELIRPSGNAYTTRRFSACLRDMDYYLRYASYALIAADNNVLDERVLQGLRETYNSLGVPIGPTVRGIQIMKEMIEAMAEDSSLNSTDFIASPFDHMTRELSELSV.

Position 72 is an N4-methylasparagine (Asn72). Position 82 (Cys82) interacts with (2R,3E)-phycocyanobilin.

It belongs to the phycobiliprotein family. Heterodimer of ApcE and this beta chain. Contains one covalently linked bilin chromophore.

The protein localises to the cellular thylakoid membrane. A variant beta-allophycocyanin (AP) which forms a complex with ApcE, a phycobilisome terminal emitter that influences energy transfer to photosystem II. This chain is Allophycocyanin subunit beta-18 (apcF), found in Synechocystis sp. (strain ATCC 27184 / PCC 6803 / Kazusa).